The following is a 751-amino-acid chain: Serine/threonine-protein kinase B-raf (751 aa).

Gly residues predominate over residues Met-1–Glu-32. The segment at Met-1–Ala-55 is disordered. Residue Ala-2 is modified to N-acetylalanine. Low complexity predominate over residues Ala-46–Ala-55. Residue Ser-135 is modified to Phosphoserine. The RBD domain maps to Pro-139–Leu-211. Zn(2+) contacts are provided by His-219, Cys-232, Cys-235, Cys-245, Cys-248, His-253, Cys-256, and Cys-264. The interval Glu-288–Gly-440 is disordered. The segment covering Pro-297 to Pro-324 has biased composition (low complexity). Ser-316 is modified (phosphoserine). Positions Pro-331–Ser-346 are enriched in basic and acidic residues. Ser-348 carries the phosphoserine modification. Thr-356 is modified (phosphothreonine; by autocatalysis). A Phosphothreonine modification is found at Thr-379. Ser-382 is subject to Phosphoserine. Thr-384 carries the phosphothreonine modification. The span at Gln-406–Ser-432 shows a compositional bias: basic and acidic residues. Residues Ser-431 and Ser-432 each carry the phosphoserine modification. One can recognise a Protein kinase domain in the interval Ile-442–Leu-702. ATP-binding positions include Ile-448–Val-456 and Lys-468. Asp-561 serves as the catalytic Proton acceptor. A Glycyl lysine isopeptide (Lys-Gly) (interchain with G-Cter in ubiquitin) cross-link involves residue Lys-563. Position 656 is an omega-N-methylarginine; by PRMT5 (Arg-656). Residues Ser-714 and Ser-735 each carry the phosphoserine modification. Phosphothreonine; by MAPK1 is present on Thr-738.

It belongs to the protein kinase superfamily. TKL Ser/Thr protein kinase family. RAF subfamily. As to quaternary structure, monomer. Homodimer. Heterodimerizes with RAF1, and the heterodimer possesses a highly increased kinase activity compared to the respective homodimers or monomers. Heterodimerization is mitogen-regulated and enhanced by 14-3-3 proteins. MAPK1/ERK2 activation can induce a negative feedback that promotes the dissociation of the heterodimer by phosphorylating BRAF at Thr-738. Heterodimerizes (via N-terminus) with KSR1 (via N-terminus) or KSR2 (via N-terminus) in a MAP2K1-dependent manner. Interacts with MAP2K1 and MAP2K2. Found in a complex with at least BRAF, HRAS, MAP2K1, MAPK3 and RGS14. Interacts with RIT1. Interacts (via N-terminus) with RGS14 (via RBD domains); the interaction mediates the formation of a ternary complex with RAF1, a ternary complex inhibited by GNAI1. Interacts with DGKH. Interacts with PRMT5. Interacts with AKAP13, MAP2K1 and KSR1. Identified in a complex with AKAP13, KSR1 and MAP2K1. Interacts with FNIP1 and FNIP2. It depends on Zn(2+) as a cofactor. Phosphorylation at Ser-348 by SGK1 inhibits its activity. Dephosphorylation of Ser-348 by the SHOC2-MRAS-PP1c (SMP) complex consisting of SHOC2, GTP-bound M-Ras/MRAS and the catalytic subunit of protein phosphatase 1 (PPP1CA, PPP1CB or PPP1CC); this relieves inactivation and stimulates kinase activity. Post-translationally, methylation by PRMT5 decreases stability and kinase activity. In terms of processing, ubiquitinated by RNF149; which leads to proteasomal degradation. Polyubiquitinated at Lys-615 in response to EGF.

It is found in the nucleus. The protein resides in the cytoplasm. The protein localises to the cell membrane. The enzyme catalyses L-seryl-[protein] + ATP = O-phospho-L-seryl-[protein] + ADP + H(+). It carries out the reaction L-threonyl-[protein] + ATP = O-phospho-L-threonyl-[protein] + ADP + H(+). Its activity is regulated as follows. In quiescent cells, maintained in an inactive state via an intramolecular interaction between the protein kinase and N-terminal domains. Following mitogen-mediated cell activation, binds via its RGB domain to active HRAS (GTP-bound) which releases the inhibitory intramolecular interaction between the two domains. This allows the MAP2K1-mediated dimerization of KSR1 or KSR2, and BRAF which activates BRAF. Involved in the transduction of mitogenic signals from the cell membrane to the nucleus. Phosphorylates MAP2K1, and thereby activates the MAP kinase signal transduction pathway. Phosphorylates PFKFB2. May play a role in the postsynaptic responses of hippocampal neurons. This is Serine/threonine-protein kinase B-raf from Mus musculus (Mouse).